The sequence spans 4592 residues: Intermembrane lipid transfer protein vps13D (4592 aa).

Residues 3 to 102 (FESVVAEVID…SSTNVSSNYS (100 aa)) form the Chorein N-terminal domain. Disordered stretches follow at residues 95–142 (TNVS…TASQ), 157–199 (LDKK…IDSQ), 286–307 (STTSSNNNNNNNNNNTTSSSSS), 445–529 (KKDD…IKGI), 574–605 (SNSTTTNNSNNNSSSSPNILATSPSNNSLSPM), 826–861 (NYNNQSSSSSSSSQPPPPKPTEETSTTNKPKKQQGI), 1040–1083 (TTSP…KRQW), 1219–1249 (YFKNKRKEENEQNEGNTEDDEQEEEEQEKKP), 1655–1717 (QQQE…QQSN), 1855–1886 (SNNNNDNNNDNNNSNNSNNNNNTSNGSGNSLF), 1971–2001 (TSSLDNTSISTTTTTTTTTTTTTTTTTTTTS), 2025–2056 (PLINDNSNKSPTSKSSSSKSSSSKSSKKEQQQ), and 2245–2270 (NNNNNNNNNNNNNNNNNNNNNTNIIN). 2 stretches are compositionally biased toward low complexity: residues 117–139 (SSSNNNNNNNNDSSSSSSNTTST) and 172–199 (KSTNTTTNNNGINNSNDKNKNNNNIDSQ). Positions 437–517 (KNATIKLNKK…KKKEEKGKSK (81 aa)) form a coiled coil. The span at 445–457 (KKDDKKDDKKDDI) shows a compositional bias: basic and acidic residues. A compositionally biased stretch (low complexity) spans 458–474 (NSSSSSIGSSNSSNNTP). Positions 475 to 529 (TKDKNKEKEKDKEKEKEKEKKKEKEKLKLEEKKKKKEEKGKSKSKDSKKNKIKGI) are enriched in basic and acidic residues. Positions 574–591 (SNSTTTNNSNNNSSSSPN) are enriched in low complexity. Residues 592–603 (ILATSPSNNSLS) are compositionally biased toward polar residues. Residues 829–838 (NQSSSSSSSS) show a composition bias toward low complexity. Over residues 1040–1059 (TTSPTFNSLNNKPSTLQNNH) the composition is skewed to polar residues. Over residues 1064-1076 (NGNSSNNNNTDSP) the composition is skewed to low complexity. The span at 1234 to 1244 (NTEDDEQEEEE) shows a compositional bias: acidic residues. Low complexity-rich tracts occupy residues 1669-1689 (KSINSKPPSPKLSLMSPLRKS) and 1702-1715 (QQQQQQQQQQQQQQ). The segment covering 2037–2048 (SKSSSSKSSSSK) has biased composition (low complexity). One copy of the TPR 1 repeat lies at 2321-2354 (TLQINDLGANIISIGNKSTSIKCFLRSIRLSDSR). Disordered regions lie at residues 2456–2489 (KTNNNNNNNNNNYNNTNSNNNNNQEEEEKDSIST), 2862–2882 (AVSTSNNPNGSGYNNSNNNNG), 3006–3035 (GEQKGKKKSTSTSTSPTLSSQPSSSSSSSS), 3106–3129 (NSSGYNSSSPSPSSSSSPSSSSSN), 3356–3384 (KLPTSPQTSSSSSPPPATTTTSTTTKRTT), 3560–3580 (NSLKIEQGRKSKKQQQQHRHN), and 3630–3679 (STNH…SKLK). 3 stretches are compositionally biased toward low complexity: residues 2458–2478 (NNNNNNNNNNYNNTNSNNNNN), 2864–2880 (STSNNPNGSGYNNSNNN), and 3015–3035 (TSTSTSPTLSSQPSSSSSSSS). The span at 3358–3384 (PTSPQTSSSSSPPPATTTTSTTTKRTT) shows a compositional bias: low complexity. The segment covering 3569-3580 (KSKKQQQQHRHN) has biased composition (basic residues). Residues 3640–3679 (SSTFNNSSNDNINNGNSNNNTSNSLSPPSSSSSINLSKLK) are compositionally biased toward low complexity. The TPR 2 repeat unit spans residues 3789–3822 (EVPKPYLGRVDIKDNDTHTSIHFYDQDTEYSPFR). 2 stretches are compositionally biased toward low complexity: residues 3872 to 3894 (TTTTTTTTNSTNDINNDNNNNNN) and 4111 to 4135 (QQLQQNPQQQQPQQQNNEIQNNPIN). Disordered regions lie at residues 3872 to 3897 (TTTTTTTTNSTNDINNDNNNNNNQYI) and 4105 to 4135 (KKHKKNQQLQQNPQQQQPQQQNNEIQNNPIN).

Its subcellular location is the membrane. Mediates the transfer of lipids between membranes at organelle contact sites. The polypeptide is Intermembrane lipid transfer protein vps13D (vps13D) (Dictyostelium discoideum (Social amoeba)).